Consider the following 167-residue polypeptide: Zymogen granule membrane protein 16 (167 aa).

A signal peptide spans 1-16; that stretch reads MLAIALLVLLCASASA. The 136-residue stretch at 24–159 folds into the Jacalin-type lectin domain; sequence SSYSGEYGGK…IDAISLHWDT (136 aa).

Belongs to the jacalin lectin family. As to expression, expressed in pancreas, colon, duodenum, and much less in stomach.

It localises to the secreted. The protein localises to the extracellular space. It is found in the extracellular matrix. Its subcellular location is the zymogen granule lumen. The protein resides in the golgi apparatus lumen. Functionally, may play a role in protein trafficking. May act as a linker molecule between the submembranous matrix on the luminal side of zymogen granule membrane (ZGM) and aggregated secretory proteins during granule formation in the TGN. The protein is Zymogen granule membrane protein 16 (Zg16) of Rattus norvegicus (Rat).